The primary structure comprises 126 residues: Fluoride-specific ion channel FluC (126 aa).

A run of 4 helical transmembrane segments spans residues 4 to 24, 33 to 53, 67 to 87, and 97 to 117; these read PLLS…FLGL, IPLG…FAMA, FVIT…IEIV, and MAML…CLGL. Na(+)-binding residues include G74 and T77.

It belongs to the fluoride channel Fluc/FEX (TC 1.A.43) family.

The protein resides in the cell inner membrane. The enzyme catalyses fluoride(in) = fluoride(out). Its activity is regulated as follows. Na(+) is not transported, but it plays an essential structural role and its presence is essential for fluoride channel function. Its function is as follows. Fluoride-specific ion channel. Important for reducing fluoride concentration in the cell, thus reducing its toxicity. The protein is Fluoride-specific ion channel FluC of Acinetobacter baumannii (strain SDF).